The chain runs to 298 residues: Protease HtpX homolog (298 aa).

The next 2 membrane-spanning stretches (helical) occupy residues 15 to 35 and 39 to 59; these read YVMI…GYVF and AMAG…MMIA. His-143 contributes to the Zn(2+) binding site. Glu-144 is an active-site residue. Residue His-147 participates in Zn(2+) binding. Transmembrane regions (helical) follow at residues 158-178 and 197-217; these read IALA…RSFW and IVMM…TTIA. Residue Glu-226 coordinates Zn(2+).

The protein belongs to the peptidase M48B family. It depends on Zn(2+) as a cofactor.

The protein localises to the cell membrane. The polypeptide is Protease HtpX homolog (Pediococcus pentosaceus (strain ATCC 25745 / CCUG 21536 / LMG 10740 / 183-1w)).